Here is a 163-residue protein sequence, read N- to C-terminus: Nucleotide-binding protein NTHI1194 (163 aa).

Belongs to the YajQ family.

Nucleotide-binding protein. The polypeptide is Nucleotide-binding protein NTHI1194 (Haemophilus influenzae (strain 86-028NP)).